Consider the following 27-residue polypeptide: U1-poneritoxin-Na3b (27 aa).

It belongs to the ponericin-G family. As to expression, expressed by the venom gland.

The protein resides in the secreted. Shows a broad spectrum of activity against both Gram-positive and Gram-negative bacteria. Also has antimicrobial activity against S.cerevisiae. Has insecticidal and non-hemolytic activity. This chain is U1-poneritoxin-Na3b, found in Neoponera apicalis (Ant).